The sequence spans 251 residues: CDP-diacylglycerol pyrophosphatase (251 aa).

A helical transmembrane segment spans residues 4 to 24; the sequence is AGLLFLVMIVIAVVAAGIGYW.

This sequence belongs to the Cdh family.

The protein resides in the cell inner membrane. It catalyses the reaction a CDP-1,2-diacyl-sn-glycerol + H2O = a 1,2-diacyl-sn-glycero-3-phosphate + CMP + 2 H(+). It participates in phospholipid metabolism; CDP-diacylglycerol degradation; phosphatidate from CDP-diacylglycerol: step 1/1. This chain is CDP-diacylglycerol pyrophosphatase, found in Shigella boydii serotype 4 (strain Sb227).